The primary structure comprises 338 residues: Tryptophan--tRNA ligase (338 aa).

ATP contacts are provided by residues 18-20 (QPS) and 26-27 (GN). The 'HIGH' region motif lies at 19 to 27 (PSGNLTIGN). D142 contributes to the L-tryptophan binding site. Residues 154–156 (GND), I193, and 202–206 (KMSKS) each bind ATP. The 'KMSKS' region motif lies at 202-206 (KMSKS).

The protein belongs to the class-I aminoacyl-tRNA synthetase family. As to quaternary structure, homodimer.

The protein localises to the cytoplasm. It carries out the reaction tRNA(Trp) + L-tryptophan + ATP = L-tryptophyl-tRNA(Trp) + AMP + diphosphate + H(+). Functionally, catalyzes the attachment of tryptophan to tRNA(Trp). In Clostridium tetani (strain Massachusetts / E88), this protein is Tryptophan--tRNA ligase.